The following is a 150-amino-acid chain: MNVILLDKIANLGNLGDQVSVKAGYARNFLLPQGKAVVANAANTEVFEARRAELEAKLAAELATATERAEKLAALEAVVIASKAGDEGKLFGSIGNRDIADAVTAAGVELAKSEVRLPLGAIRATGEFEIDVQLHAEVKAVVKLSVVAED.

It belongs to the bacterial ribosomal protein bL9 family.

In terms of biological role, binds to the 23S rRNA. The polypeptide is Large ribosomal subunit protein bL9 (Shewanella loihica (strain ATCC BAA-1088 / PV-4)).